We begin with the raw amino-acid sequence, 324 residues long: Adenine deaminase (324 aa).

Residues His8, His10, and His186 each coordinate Zn(2+). The active-site Proton donor is Glu189. Asp267 contributes to the Zn(2+) binding site. Residue Asp268 coordinates substrate.

Belongs to the metallo-dependent hydrolases superfamily. Adenosine and AMP deaminases family. Adenine deaminase type 2 subfamily. Zn(2+) serves as cofactor.

It catalyses the reaction adenine + H2O + H(+) = hypoxanthine + NH4(+). In terms of biological role, catalyzes the hydrolytic deamination of adenine to hypoxanthine. Plays an important role in the purine salvage pathway and in nitrogen catabolism. The polypeptide is Adenine deaminase (Mesorhizobium japonicum (strain LMG 29417 / CECT 9101 / MAFF 303099) (Mesorhizobium loti (strain MAFF 303099))).